A 422-amino-acid chain; its full sequence is GPI mannosyltransferase 1 (422 aa).

8 helical membrane passes run 10-30 (TTPL…YGIY), 82-102 (FPAF…WLIL), 162-182 (IILG…PAIV), 216-236 (LKFG…MFAI), 282-302 (IESF…PLAL), 327-347 (SQYF…SSFL), 352-372 (LGIF…QQGY), and 385-405 (GLWL…GVII).

This sequence belongs to the PIGM family.

Its subcellular location is the endoplasmic reticulum membrane. Its pathway is glycolipid biosynthesis; glycosylphosphatidylinositol-anchor biosynthesis. Functionally, mannosyltransferase involved in glycosylphosphatidylinositol-anchor biosynthesis. Transfers the first alpha-1,4-mannose to GlcN-acyl-PI during GPI precursor assembly. Required for cell wall integrity. The protein is GPI mannosyltransferase 1 (GPI14) of Gibberella zeae (strain ATCC MYA-4620 / CBS 123657 / FGSC 9075 / NRRL 31084 / PH-1) (Wheat head blight fungus).